The following is a 957-amino-acid chain: Protein translocase subunit SecA (957 aa).

ATP is bound by residues glutamine 87, 105 to 109, and aspartate 512; that span reads GEGKT. Residues 924 to 957 form a disordered region; that stretch reads AAPAQAPSKSKRSAGRNDPCPCGSGQKYKKCCGK. Positions 943, 945, 954, and 955 each coordinate Zn(2+).

Belongs to the SecA family. Monomer and homodimer. Part of the essential Sec protein translocation apparatus which comprises SecA, SecYEG and auxiliary proteins SecDF-YajC and YidC. Requires Zn(2+) as cofactor.

It localises to the cell inner membrane. It is found in the cytoplasm. The enzyme catalyses ATP + H2O + cellular proteinSide 1 = ADP + phosphate + cellular proteinSide 2.. Part of the Sec protein translocase complex. Interacts with the SecYEG preprotein conducting channel. Has a central role in coupling the hydrolysis of ATP to the transfer of proteins into and across the cell membrane, serving as an ATP-driven molecular motor driving the stepwise translocation of polypeptide chains across the membrane. The protein is Protein translocase subunit SecA of Geobacter sp. (strain M21).